A 172-amino-acid chain; its full sequence is Regulator of hemoglobinization and erythroid cell expansion protein (172 aa).

The chain crosses the membrane as a helical span at residues 9 to 29; the sequence is WHGLVIAVVSLFLQACFLTAI. The segment at 52–106 is disordered; sequence VPRPSPGHHHPPAVKEMKETQTERDIPMSDSLYRHDSDTPSDSLDSSCSSPPACQ. Basic and acidic residues predominate over residues 64–89; sequence AVKEMKETQTERDIPMSDSLYRHDSD. Residues 91–103 are compositionally biased toward low complexity; the sequence is PSDSLDSSCSSPP. Residues Tyr132 and Tyr141 each carry the phosphotyrosine modification.

In terms of assembly, interacts with EPOR; this interaction occurs in a erythropoietin (EPO)-dependent manner. Interacts with JAK2; this interaction occurs in a erythropoietin (EPO)-dependent manner. Interacts (via tyrosine-phosphorylated form) with GRB2. Post-translationally, phosphorylated. Phosphorylation on Tyr-132 and Tyr-141 occurs in a erythropoietin (EPO)-dependent manner. As to expression, expressed in the proerythroblasts (at protein level). Expressed strongly in the kidney. Expressed weakly in the pancreas, liver and lung. Expressed strongly in erythroid progenitor cells (EPCs). Expressed weakly in T-cells and neutrophils.

The protein resides in the cell membrane. Its function is as follows. Acts as a signaling transduction factor of the EPO-EPOR signaling pathway promoting erythroid cell differentiation. The protein is Regulator of hemoglobinization and erythroid cell expansion protein of Homo sapiens (Human).